The sequence spans 128 residues: Nanos homolog 1 (128 aa).

Positions 7–23 (FNSWSDYLGLSSLISRG) are essential for its translational repressor activity. The disordered stretch occupies residues 23 to 58 (GLQPREGGESPRPRWKASSPTPAEPLPSKAAEAHGH). The segment at 60–114 (GCGFCRSNREAQSLYSSHRLRAPDGRVLCPVLRGYTCPLCGANGDWAHTMRYCPL) adopts a Nanos-type zinc-finger fold. Residues Cys61, Cys64, His77, Cys88, Cys96, Cys99, His107, and Cys112 each contribute to the Zn(2+) site. 2 consecutive short sequence motifs (C2HC) follow at residues 61–88 (CGFCRSNREAQSLYSSHRLRAPDGRVLC) and 96–112 (CPLCGANGDWAHTMRYC).

It belongs to the nanos family. Interacts with ccnb1.

The protein resides in the cytoplasm. It is found in the perinuclear region. In terms of biological role, acts as a translational repressor. Can mediate repression affecting different steps in the translation process: cap-driven, IRES-driven, polyadenylated RNAs or nonpolyadenylated RNAs. Essential for the development of primordial germ cells (PGCs) by ensuring their proper migration and survival. The chain is Nanos homolog 1 (nanos1) from Xenopus tropicalis (Western clawed frog).